A 157-amino-acid polypeptide reads, in one-letter code: MLFTTFVSLLLVILCLVHVSAHPLQSFRSSSAIGKQKHKIKSRQFEEEIAQGAEDSIELFEFPRVHDSSEQIHERTEQQNITTKNIILAINKNSRKHGGLHRLPAQVQGEGEFTYDRQRNAVGSYRYGDSHGNSREAEYSVADHQSASGEYKFGPTT.

The first 21 residues, 1-21 (MLFTTFVSLLLVILCLVHVSA), serve as a signal peptide directing secretion. Residues 124–157 (SYRYGDSHGNSREAEYSVADHQSASGEYKFGPTT) form a disordered region. Residues 128–138 (GDSHGNSREAE) show a composition bias toward basic and acidic residues.

In terms of assembly, interacts with a maize homolog of SGT1, a factor acting in cell cycle progression in yeast Saccharomyces cerevisiae and an important component of plant and human innate immunity.

The protein localises to the secreted. It localises to the host cytoplasm. It is found in the host nucleus. In terms of biological role, effector protein involved in the induction of tumors in infected plant tissues by the fungus. Required for the reactivation of plant DNA synthesis, which is crucial for tumor progression in leaf cells. Interferes with the MAPK-triggered phosphorylation of maize SGT1 at a monocot-specific phosphorylation site, resulting in both modulation of immune responses and reactivation of DNA synthesis during leaf tumor formation. The sequence is that of Secreted effector protein See1 from Mycosarcoma maydis (Corn smut fungus).